The following is a 914-amino-acid chain: Dynamin-2A (914 aa).

The residue at position 1 (Met-1) is an N-acetylmethionine. The Dynamin-type G domain occupies 35–303; that stretch reads PATFLNVVAL…IRSRMKLRLP (269 aa). Positions 45 to 52 are G1 motif; that stretch reads GNVGAGKS. 45-52 serves as a coordination point for GTP; that stretch reads GNVGAGKS. Residues 71–73 form a G2 motif region; it reads ATR. A G3 motif region spans residues 143 to 146; sequence DLPG. GTP contacts are provided by residues 143–147 and 204–207; these read DLPGL and GKID. The interval 204–207 is G4 motif; that stretch reads GKID. A G5 motif region spans residues 238 to 241; sequence AVIG. Basic and acidic residues predominate over residues 507–522; that stretch reads RREEELKGRSSKKGQD. Disordered stretches follow at residues 507-570 and 629-648; these read RREE…TAGP and PEDE…NGPD. Positions 523-535 are enriched in polar residues; it reads AEQSLLSRATSPQ. 2 stretches are compositionally biased toward basic and acidic residues: residues 547-560 and 634-645; these read SMKD…KETP and EKSKSSKDKKAN. Residues 572 to 696 form the PH domain; sequence GEITAGYLMK…WINKLQKVIQ (125 aa). Residues 730 to 823 enclose the GED domain; it reads LRWMSQEVRG…QLSIHDNRAA (94 aa). The stretch at 781 to 805 forms a coiled coil; it reads NERIESLIQEDQNVKRRRERYQKQS. The disordered stretch occupies residues 821-914; sequence RAAAASSYSD…PPPTGSAYRY (94 aa). Polar residues-rich tracts occupy residues 826–839 and 852–866; these read SSYS…SSPR and AFNS…SLSK.

This sequence belongs to the TRAFAC class dynamin-like GTPase superfamily. Dynamin/Fzo/YdjA family. In terms of assembly, binds PtdIns3P. Interacts with SH3P3 (via SH3 domain) and (via C-terminus) with GAMMA-ADR. May homooligomerize or heterooligomerize.

The protein localises to the cytoplasm. Its subcellular location is the cytosol. The protein resides in the golgi apparatus membrane. It is found in the cytoskeleton. It localises to the phragmoplast. The protein localises to the cytoplasmic vesicle. Its subcellular location is the clathrin-coated vesicle. It carries out the reaction GTP + H2O = GDP + phosphate + H(+). With respect to regulation, increased GTPase activity in the presence of phosphatidic acid. Microtubule-associated force-producing protein involved in clathrin-mediated vesicle trafficking from the trans-Golgi network to the central vacuole. Able to bind and hydrolyze GTP. Binds specifically to phosphatidylinositol 3-phosphate (PtdIns3P). This chain is Dynamin-2A (DRP2A), found in Arabidopsis thaliana (Mouse-ear cress).